Consider the following 864-residue polypeptide: Putative Gly-rich membrane protein Bcell_0380 (864 aa).

The chain crosses the membrane as a helical span at residues 7–27; it reads ITFLAAFICIIFVIYAIYHSV. The disordered stretch occupies residues 372-399; it reads TVENSFYDEDTTGQSDTGKGTPMSTADM. Over residues 383–395 the composition is skewed to polar residues; the sequence is TGQSDTGKGTPMS.

It is found in the cell membrane. The polypeptide is Putative Gly-rich membrane protein Bcell_0380 (Evansella cellulosilytica (strain ATCC 21833 / DSM 2522 / FERM P-1141 / JCM 9156 / N-4) (Bacillus cellulosilyticus)).